The following is a 354-amino-acid chain: NADH-quinone oxidoreductase subunit H (354 aa).

Helical transmembrane passes span leucine 25 to tryptophan 45, tryptophan 91 to isoleucine 111, leucine 126 to alanine 146, methionine 170 to valine 190, phenylalanine 205 to isoleucine 225, isoleucine 267 to phenylalanine 287, phenylalanine 290 to tryptophan 310, and isoleucine 330 to leucine 350.

It belongs to the complex I subunit 1 family. In terms of assembly, NDH-1 is composed of 14 different subunits. Subunits NuoA, H, J, K, L, M, N constitute the membrane sector of the complex.

It is found in the cell inner membrane. It catalyses the reaction a quinone + NADH + 5 H(+)(in) = a quinol + NAD(+) + 4 H(+)(out). Its function is as follows. NDH-1 shuttles electrons from NADH, via FMN and iron-sulfur (Fe-S) centers, to quinones in the respiratory chain. The immediate electron acceptor for the enzyme in this species is believed to be ubiquinone. Couples the redox reaction to proton translocation (for every two electrons transferred, four hydrogen ions are translocated across the cytoplasmic membrane), and thus conserves the redox energy in a proton gradient. This subunit may bind ubiquinone. The chain is NADH-quinone oxidoreductase subunit H from Paraburkholderia xenovorans (strain LB400).